We begin with the raw amino-acid sequence, 245 residues long: Thiopurine S-methyltransferase (245 aa).

29–40 is a binding site for S-adenosyl-L-methionine; sequence WREKWVDGKIGF. Residue Phe-40 participates in substrate binding. Residue Lys-58 is modified to N6-acetyllysine. S-adenosyl-L-methionine-binding residues include Leu-69, Glu-90, and Arg-152.

This sequence belongs to the class I-like SAM-binding methyltransferase superfamily. TPMT family. Monomer.

Its subcellular location is the cytoplasm. It carries out the reaction S-adenosyl-L-methionine + a thiopurine = S-adenosyl-L-homocysteine + a thiopurine S-methylether.. The chain is Thiopurine S-methyltransferase (TPMT) from Panthera pardus (Leopard).